We begin with the raw amino-acid sequence, 780 residues long: Cullin-1 (780 aa).

The Cullin neddylation domain occupies 710-771; the sequence is DRKSVISACI…EKEYMLRTEG (62 aa). Residue lysine 724 forms a Glycyl lysine isopeptide (Lys-Gly) (interchain with G-Cter in NEDD8) linkage.

This sequence belongs to the cullin family. In terms of assembly, component of an SCF (SKP1-CUL1-F-box protein) E3 ubiquitin ligase complex composed of cul-1, fsn-1, rpm-1 and skr-1. Interacts with Skp1-related proteins skr-1, skr-2, skr-3, skr-4, skr-7, skr-8, skr-9 and skr-10. Post-translationally, neddylated; which enhances the ubiquitination activity of SCF. In terms of tissue distribution, ubiquitous.

It is found in the cytoplasm. Its pathway is protein modification; protein ubiquitination. Functionally, probable core component of multiple cullin-RING-based SCF (SKP1-CUL1-F-box) E3 ubiquitin-protein ligase complexes which mediate the ubiquitination and subsequent proteasomal degradation of target proteins. As a scaffold protein may contribute to catalysis through positioning of the substrate and the ubiquitin-conjugating enzyme. Required for developmentally programmed transitions from the G1 phase of the cell cycle to the G0 phase or the apoptotic pathway. In Caenorhabditis elegans, this protein is Cullin-1 (cul-1).